The sequence spans 449 residues: Plasmepsin IV (449 aa).

Residues 1-37 (MALTVKEEEFSNTLIKNASAFDRLKLGNLKNLKIQKK) are Cytoplasmic-facing. Residues 1–121 (MALTVKEEEF…SGYAQKGYLG (121 aa)) constitute a propeptide that is removed on maturation. Residues 38–58 (LQFLYLILFVLITGVFFFFLI) form a helical; Signal-anchor for type II membrane protein membrane-spanning segment. Topologically, residues 59–449 (GNFYSHRKLY…SVGFAVAKNL (391 aa)) are lumenal. The Peptidase A1 domain occupies 137-444 (FYGEGQIGTN…DYEKESVGFA (308 aa)). D155 is an active-site residue. C168 and C173 are oxidised to a cystine. D335 is an active-site residue. C370 and C406 are joined by a disulfide.

The protein belongs to the peptidase A1 family. Component of the hemozoin formation complex (HFC) composed of falcipains FP2A and/or FP2B, plasmepsins PMII, PMIII/HAP and PMIV, heme detoxifying protein HDP and falcilysin FLN. The HFC complex is involved in hemoglobin degradation and detoxification of heme in the food vacuole during the asexual blood stage. Proteolytically cleaved into the soluble active mature form by cysteine proteases in the digestive vacuole of trophozoites. Proteolysis requires an acidic environment. Autoprocessing or transprocessing by other plasmepsins such as PMII may serve as an alternate activation system.

The protein resides in the membrane. Its subcellular location is the vacuole lumen. It catalyses the reaction Hydrolysis of the bonds linking certain hydrophobic residues in hemoglobin or globin. Also cleaves small molecules substrates such as Ala-Leu-Glu-Arg-Thr-Phe-|-Phe(NO2)-Ser-Phe-Pro-Thr.. With respect to regulation, inhibited by pepstatin A. During the asexual blood stage, catalyzes the cleavage of denatured host hemoglobin (Hb) or globins. Digestion of host Hb is an essential step which provides the parasite with amino acids for protein synthesis, and regulates osmolarity. This is Plasmepsin IV from Plasmodium falciparum (isolate HB3).